Reading from the N-terminus, the 287-residue chain is NADH-cytochrome b5 reductase 1 (287 aa).

A helical transmembrane segment spans residues 5 to 25 (FEALVTALVLAVSFIFIYGKF). One can recognise an FAD-binding FR-type domain in the interval 41 to 145 (KDWQEFSLLT…RGPKGFYHYE (105 aa)). Residues 125-142 (AELA…KGFY) and 151-183 (EIGM…RVCL) contribute to the FAD site.

Belongs to the flavoprotein pyridine nucleotide cytochrome reductase family. In terms of assembly, monomer. Component of the 2-(3-amino-3-carboxypropyl)histidine synthase complex composed of DPH1, DPH2, DPH3 and a NADH-dependent reductase, predominantly CBR1. FAD is required as a cofactor.

It is found in the mitochondrion outer membrane. It catalyses the reaction 2 Fe(III)-[cytochrome b5] + NADH = 2 Fe(II)-[cytochrome b5] + NAD(+) + H(+). The enzyme catalyses 2 Fe(3+)-[Dph3] + NADH = 2 Fe(2+)-[Dph3] + NAD(+) + H(+). The protein operates within protein modification; peptidyl-diphthamide biosynthesis. In terms of biological role, NADH-dependent reductase for DPH3 and cytochrome b5. Required for the first step of diphthamide biosynthesis, a post-translational modification of histidine which occurs in elongation factor 2. DPH1 and DPH2 transfer a 3-amino-3-carboxypropyl (ACP) group from S-adenosyl-L-methionine (SAM) to a histidine residue, the reaction is assisted by a reduction system comprising DPH3 and a NADH-dependent reductase, predominantly CBR1. By reducing DPH3, also involved in the formation of the tRNA wobble base modification mcm5s 2U (5-methoxycarbonylmethyl-2-thiouridine), mediated by the elongator complex. The cytochrome b5/NADH cytochrome b5 reductase electron transfer system supports the catalytic activity of several sterol biosynthetic enzymes. The protein is NADH-cytochrome b5 reductase 1 (CBR1) of Eremothecium gossypii (strain ATCC 10895 / CBS 109.51 / FGSC 9923 / NRRL Y-1056) (Yeast).